Here is a 157-residue protein sequence, read N- to C-terminus: UPF0262 protein Avi_0642 (157 aa).

The protein belongs to the UPF0262 family.

This Allorhizobium ampelinum (strain ATCC BAA-846 / DSM 112012 / S4) (Agrobacterium vitis (strain S4)) protein is UPF0262 protein Avi_0642.